We begin with the raw amino-acid sequence, 358 residues long: Probable tartrate dehydrogenase/decarboxylase TtuC' (358 aa).

Mn(2+) is bound by residues D222, D246, and D250.

The protein belongs to the isocitrate and isopropylmalate dehydrogenases family. Mg(2+) is required as a cofactor. The cofactor is Mn(2+). Requires K(+) as cofactor.

Its subcellular location is the cytoplasm. The enzyme catalyses tartrate + NAD(+) = 2-hydroxy-3-oxosuccinate + NADH + H(+). It carries out the reaction (2R,3S)-tartrate + NAD(+) = 2-hydroxy-3-oxosuccinate + NADH + H(+). The catalysed reaction is (2R,3R)-tartrate + NAD(+) = 2-hydroxy-3-oxosuccinate + NADH + H(+). It catalyses the reaction (2R,3R)-tartrate + H(+) = (R)-glycerate + CO2. The enzyme catalyses (R)-malate + NAD(+) = pyruvate + CO2 + NADH. Its pathway is carbohydrate acid metabolism; tartrate degradation; 2-hydroxy-3-oxosuccinate from L-tartrate: step 1/1. It functions in the pathway carbohydrate acid metabolism; tartrate degradation; 2-hydroxy-3-oxosuccinate from meso-tartrate: step 1/1. It participates in carbohydrate acid metabolism; tartrate degradation; D-glycerate from L-tartrate: step 1/1. Functionally, has multiple catalytic activities. Apart from catalyzing the oxidation of (+)-tartrate to oxaloglycolate, also converts meso-tartrate to D-glycerate and catalyzes the oxidative decarboxylation of D-malate to pyruvate. This chain is Probable tartrate dehydrogenase/decarboxylase TtuC' (ttuC'), found in Agrobacterium vitis (Rhizobium vitis).